The chain runs to 171 residues: Envelope glycoprotein N (171 aa).

Residues 1-132 lie on the Virion surface side of the membrane; the sequence is MARINSNSGT…CSALKYRIYV (132 aa). A helical membrane pass occupies residues 133 to 153; that stretch reads SSFVSVLNIILYVLLFLASVV. Residues 154–171 are Intravirion-facing; the sequence is YIRYLCHQSITTETVKDY.

It belongs to the herpesviridae glycoprotein N family. In terms of assembly, interacts (via N-terminus) with gM (via N-terminus). The gM-gN heterodimer forms the gCII complex.

Its subcellular location is the virion membrane. The protein resides in the host membrane. It is found in the host Golgi apparatus. The protein localises to the host trans-Golgi network. Its function is as follows. Envelope glycoprotein necessary for proper maturation of gM and modulation of its membrane fusion activity. Also plays a critical role in virion morphogenesis. The protein is Envelope glycoprotein N of Elephas maximus (Indian elephant).